We begin with the raw amino-acid sequence, 373 residues long: Spore germination protein A3 (373 aa).

Residues 1–17 (MKIRILCMFICTLLLSG) form the signal peptide. C18 is lipidated: N-palmitoyl cysteine. C18 carries the S-diacylglycerol cysteine lipid modification.

It belongs to the GerABKC lipoprotein family.

The protein resides in the cell membrane. Its function is as follows. Forms a complex at the inner spore membrane which acts as a receptor for L-alanine, thus is involved in the stimulation of germination in response to alanine. Can stimulate germination in the absence of GerD and GerK gene products (fructose and glucose receptors, respectively), but the response is improved in their presence. The chain is Spore germination protein A3 (gerAC) from Bacillus subtilis (strain 168).